The sequence spans 147 residues: Hemoglobin subunit beta (147 aa).

The Globin domain occupies 2 to 147 (DWTDAERAAI…VVSALGRQYH (146 aa)). Heme b is bound by residues His63 and His92.

This sequence belongs to the globin family. As to quaternary structure, heterotetramer of two alpha chains and two beta chains. Red blood cells.

Functionally, involved in oxygen transport from gills to the various peripheral tissues. The polypeptide is Hemoglobin subunit beta (hbb) (Leiostomus xanthurus (Spot)).